The following is a 419-amino-acid chain: Hyaluronan synthase (419 aa).

5 helical membrane-spanning segments follow: residues 8-28 (LIVL…MYLF), 33-53 (VGIY…LSFL), 318-338 (IVAL…VAIG), 345-365 (AIQL…IVAL), and 376-396 (PASF…LQPL).

The protein belongs to the NodC/HAS family. Requires Mg(2+) as cofactor.

The protein resides in the cell membrane. It catalyses the reaction [hyaluronan](n) + UDP-N-acetyl-alpha-D-glucosamine = N-acetyl-beta-D-glucosaminyl-(1-&gt;4)-[hyaluronan](n) + UDP + H(+). The catalysed reaction is N-acetyl-beta-D-glucosaminyl-(1-&gt;4)-[hyaluronan](n) + UDP-alpha-D-glucuronate = [hyaluronan](n+1) + UDP + H(+). It participates in glycan biosynthesis; hyaluronan biosynthesis. In terms of biological role, glycosaminoglycan synthesis. The hyaluronic acid capsule is involved in the pathogenicity of group A Streptococci; it may be the major virulence determinant. In Streptococcus pyogenes serotype M1, this protein is Hyaluronan synthase (hasA).